The sequence spans 51 residues: Large ribosomal subunit protein eL39 (51 aa).

The disordered stretch occupies residues 32 to 51 (KGSVKQHPKMRHWRRKNLKK). The segment covering 33–51 (GSVKQHPKMRHWRRKNLKK) has biased composition (basic residues).

This sequence belongs to the eukaryotic ribosomal protein eL39 family.

The polypeptide is Large ribosomal subunit protein eL39 (Methanococcus maripaludis (strain C5 / ATCC BAA-1333)).